Reading from the N-terminus, the 187-residue chain is Probable DNA endonuclease SmrA (187 aa).

The region spanning 88 to 169 is the Smr domain; the sequence is LNLLRQPVEE…GSGACYVALR (82 aa).

Functionally, has DNA endonuclease activity. Binds DNA. This chain is Probable DNA endonuclease SmrA (smrA), found in Escherichia coli (strain K12).